A 721-amino-acid polypeptide reads, in one-letter code: MQGQTQSISFDGREIRLTTGRFAPQAGGSVLVECGDTAVLVTATRSGGREGIDFLPLICDYEERLYAAGRIPGSYMRRESRPPERATLTARLIDRPMRPLFPSWLRDDLQVVATCLSLDERVPADVLAVTGASIATLLAGIPFNGPMAAVRVGLLGDDFVLNPSYREIERGDLDLVVAGTPDGVVMVEAGANQLPEQDVIEAIDFGYEAICELIKAQEQLLKDLGITQVKPEKPDEDSTVPAYLEKQCSKAISAVLSKFDQSKDERDTALETVKGEVSETIAGLKEDHAVRQALASSPKLLGNSFKALTKKLMRQQILKDGKRVDGRGLDEVRQISAMAGVLPRRVHGSGLFQRGLTQVLSTATLGTPSDAQEMDDLHPNTEKLYLHHYNFPPYSVGETRPMRSPGRREIGHGALAERAILPVLPEKDTFPYVVRVVSEVLSSNGSTSMGSVCGSTLSLMDAGVPLKAPVSGAAMGLIKEGDEVRILTDIQGIEDFLGDMDFKVAGSEKGITALQMDMKITGLSVKTVAEAVNQARPARLHILEKMLEAIDTPRDNLSPHAPRLLSFRIDPELIGTVIGPGGRTIKGITERTNTKIDIEDGGIVTIASHDGAAAEEAQKIIEGLTRKVNEGEVFSGSITRIIPIGAFVEILPGKEGMIHISQLSEARVEKVEDVVKVGDEVTVRVREIDNRGRINLTLRGVPQAGDAADVEPQPTPVAPLS.

Mg(2+) is bound by residues Asp495 and Asp501. The KH domain maps to Pro562–Ile621. The S1 motif domain maps to Gly631–Arg699.

Belongs to the polyribonucleotide nucleotidyltransferase family. It depends on Mg(2+) as a cofactor.

It is found in the cytoplasm. The catalysed reaction is RNA(n+1) + phosphate = RNA(n) + a ribonucleoside 5'-diphosphate. Functionally, involved in mRNA degradation. Catalyzes the phosphorolysis of single-stranded polyribonucleotides processively in the 3'- to 5'-direction. This chain is Polyribonucleotide nucleotidyltransferase, found in Synechococcus sp. (strain CC9605).